The sequence spans 140 residues: MLMPKRVKHRKQMKGRMKGDAQRGASLAFGEFGLQATECGWVDSRQIEAARIAMTRYIKRGGKIWIRLFPDKPLTSKPAETRMGKGKGSPDSWVCVVKPGKVLYEMEGVTEEIAREAFRLAAHKLPVGTKFISRKDGHES.

Positions 1–16 (MLMPKRVKHRKQMKGR) are enriched in basic residues. A disordered region spans residues 1 to 20 (MLMPKRVKHRKQMKGRMKGD).

This sequence belongs to the universal ribosomal protein uL16 family. As to quaternary structure, part of the 50S ribosomal subunit.

Functionally, binds 23S rRNA and is also seen to make contacts with the A and possibly P site tRNAs. In Geobacter sulfurreducens (strain ATCC 51573 / DSM 12127 / PCA), this protein is Large ribosomal subunit protein uL16.